A 39-amino-acid chain; its full sequence is Potassium channel toxin alpha-KTx 2.17 (39 aa).

Disulfide bonds link Cys-7/Cys-29, Cys-13/Cys-34, and Cys-17/Cys-36. At Ile-39 the chain carries Isoleucine amide.

Belongs to the short scorpion toxin superfamily. Potassium channel inhibitor family. Alpha-KTx 02 subfamily. In terms of tissue distribution, expressed by the venom gland.

The protein localises to the secreted. Functionally, blocks human voltage-gated potassium channels Kv1.1/KCNA1 (IC(50)=4.8 nM) and Kv1.2/KCNA2 (IC(50)=2.9 nM). The chain is Potassium channel toxin alpha-KTx 2.17 from Centruroides tecomanus (Scorpion).